A 239-amino-acid chain; its full sequence is tRNA (guanine-N(7)-)-methyltransferase (239 aa).

Positions 69, 94, 121, and 144 each coordinate S-adenosyl-L-methionine. D144 is a catalytic residue. K148 serves as a coordination point for substrate. Residues 150 to 155 are interaction with RNA; the sequence is RHNKRR. Substrate-binding positions include D180 and 217–220; that span reads TKFE.

Belongs to the class I-like SAM-binding methyltransferase superfamily. TrmB family. Monomer.

It carries out the reaction guanosine(46) in tRNA + S-adenosyl-L-methionine = N(7)-methylguanosine(46) in tRNA + S-adenosyl-L-homocysteine. It participates in tRNA modification; N(7)-methylguanine-tRNA biosynthesis. Its function is as follows. Catalyzes the formation of N(7)-methylguanine at position 46 (m7G46) in tRNA. This Sodalis glossinidius (strain morsitans) protein is tRNA (guanine-N(7)-)-methyltransferase.